An 887-amino-acid chain; its full sequence is Valine--tRNA ligase (887 aa).

A 'HIGH' region motif is present at residues 45–55 (PNVTGILHMGH). Residues 528–532 (KMSKS) carry the 'KMSKS' region motif. Position 531 (Lys531) interacts with ATP. A coiled-coil region spans residues 817–887 (TGLLNNEAEI…LKESLKSFEE (71 aa)).

The protein belongs to the class-I aminoacyl-tRNA synthetase family. ValS type 1 subfamily. As to quaternary structure, monomer.

The protein localises to the cytoplasm. It catalyses the reaction tRNA(Val) + L-valine + ATP = L-valyl-tRNA(Val) + AMP + diphosphate. In terms of biological role, catalyzes the attachment of valine to tRNA(Val). As ValRS can inadvertently accommodate and process structurally similar amino acids such as threonine, to avoid such errors, it has a 'posttransfer' editing activity that hydrolyzes mischarged Thr-tRNA(Val) in a tRNA-dependent manner. The chain is Valine--tRNA ligase from Fusobacterium nucleatum subsp. nucleatum (strain ATCC 25586 / DSM 15643 / BCRC 10681 / CIP 101130 / JCM 8532 / KCTC 2640 / LMG 13131 / VPI 4355).